We begin with the raw amino-acid sequence, 359 residues long: tRNA-specific 2-thiouridylase MnmA (359 aa).

ATP-binding positions include 9-16 (GMSGGVDS) and M35. Residue C104 is the Nucleophile of the active site. An intrachain disulfide couples C104 to C200. G128 lines the ATP pocket. Positions 150-152 (KDQ) are interaction with tRNA. The active-site Cysteine persulfide intermediate is the C200. The tract at residues 306-307 (RY) is interaction with tRNA.

Belongs to the MnmA/TRMU family.

The protein localises to the cytoplasm. The enzyme catalyses S-sulfanyl-L-cysteinyl-[protein] + uridine(34) in tRNA + AH2 + ATP = 2-thiouridine(34) in tRNA + L-cysteinyl-[protein] + A + AMP + diphosphate + H(+). In terms of biological role, catalyzes the 2-thiolation of uridine at the wobble position (U34) of tRNA, leading to the formation of s(2)U34. This Clostridium perfringens (strain ATCC 13124 / DSM 756 / JCM 1290 / NCIMB 6125 / NCTC 8237 / Type A) protein is tRNA-specific 2-thiouridylase MnmA.